The following is a 208-amino-acid chain: Microcin J25-processing protein McjB (208 aa).

The protein resides in the cytoplasm. Functionally, along with McjC, necessary and sufficient to process the inactive microcin J25 (McjA) precursor into the active peptide. The chain is Microcin J25-processing protein McjB (mcjB) from Escherichia coli.